The following is a 319-amino-acid chain: 4-hydroxy-3-methylbut-2-enyl diphosphate reductase (319 aa).

Cys-12 serves as a coordination point for [4Fe-4S] cluster. (2E)-4-hydroxy-3-methylbut-2-enyl diphosphate contacts are provided by His-41 and His-74. His-41 and His-74 together coordinate dimethylallyl diphosphate. Isopentenyl diphosphate-binding residues include His-41 and His-74. [4Fe-4S] cluster is bound at residue Cys-96. His-124 contributes to the (2E)-4-hydroxy-3-methylbut-2-enyl diphosphate binding site. His-124 provides a ligand contact to dimethylallyl diphosphate. His-124 is a binding site for isopentenyl diphosphate. Glu-126 functions as the Proton donor in the catalytic mechanism. Thr-167 lines the (2E)-4-hydroxy-3-methylbut-2-enyl diphosphate pocket. Position 197 (Cys-197) interacts with [4Fe-4S] cluster. (2E)-4-hydroxy-3-methylbut-2-enyl diphosphate contacts are provided by Ser-225, Ser-226, Asn-227, and Ser-269. Positions 225, 226, 227, and 269 each coordinate dimethylallyl diphosphate. Residues Ser-225, Ser-226, Asn-227, and Ser-269 each coordinate isopentenyl diphosphate.

This sequence belongs to the IspH family. As to quaternary structure, homodimer. Requires [4Fe-4S] cluster as cofactor.

It carries out the reaction isopentenyl diphosphate + 2 oxidized [2Fe-2S]-[ferredoxin] + H2O = (2E)-4-hydroxy-3-methylbut-2-enyl diphosphate + 2 reduced [2Fe-2S]-[ferredoxin] + 2 H(+). The catalysed reaction is dimethylallyl diphosphate + 2 oxidized [2Fe-2S]-[ferredoxin] + H2O = (2E)-4-hydroxy-3-methylbut-2-enyl diphosphate + 2 reduced [2Fe-2S]-[ferredoxin] + 2 H(+). The protein operates within isoprenoid biosynthesis; dimethylallyl diphosphate biosynthesis; dimethylallyl diphosphate from (2E)-4-hydroxy-3-methylbutenyl diphosphate: step 1/1. Its pathway is isoprenoid biosynthesis; isopentenyl diphosphate biosynthesis via DXP pathway; isopentenyl diphosphate from 1-deoxy-D-xylulose 5-phosphate: step 6/6. Catalyzes the conversion of 1-hydroxy-2-methyl-2-(E)-butenyl 4-diphosphate (HMBPP) into a mixture of isopentenyl diphosphate (IPP) and dimethylallyl diphosphate (DMAPP). Acts in the terminal step of the DOXP/MEP pathway for isoprenoid precursor biosynthesis. This Buchnera aphidicola subsp. Acyrthosiphon pisum (strain Tuc7) protein is 4-hydroxy-3-methylbut-2-enyl diphosphate reductase.